The sequence spans 309 residues: UDP-N-acetylenolpyruvoylglucosamine reductase (309 aa).

An FAD-binding PCMH-type domain is found at 24 to 187; the sequence is RVGGPADWLF…TKAVFEAPRG (164 aa). Residue R167 is part of the active site. Positions 200 to 213 are enriched in basic and acidic residues; sequence LARRDATQPTKERS. A disordered region spans residues 200-230; the sequence is LARRDATQPTKERSAGSTFRNPAGFSSTGRS. A compositionally biased stretch (polar residues) spans 214 to 228; it reads AGSTFRNPAGFSSTG. The active-site Proton donor is S216. Residue E298 is part of the active site.

This sequence belongs to the MurB family. FAD serves as cofactor.

The protein resides in the cytoplasm. It catalyses the reaction UDP-N-acetyl-alpha-D-muramate + NADP(+) = UDP-N-acetyl-3-O-(1-carboxyvinyl)-alpha-D-glucosamine + NADPH + H(+). It participates in cell wall biogenesis; peptidoglycan biosynthesis. Cell wall formation. This is UDP-N-acetylenolpyruvoylglucosamine reductase from Roseobacter denitrificans (strain ATCC 33942 / OCh 114) (Erythrobacter sp. (strain OCh 114)).